The following is a 799-amino-acid chain: Mitochondrial intermediate peptidase (799 aa).

His-562 is a Zn(2+) binding site. The active site involves Glu-563. Residues His-566 and His-569 each coordinate Zn(2+).

The protein belongs to the peptidase M3 family. It depends on Zn(2+) as a cofactor.

It localises to the mitochondrion matrix. The catalysed reaction is Release of an N-terminal octapeptide as second stage of processing of some proteins imported into the mitochondrion.. Its function is as follows. Cleaves proteins, imported into the mitochondrion, to their mature size. While most mitochondrial precursor proteins are processed to the mature form in one step by mitochondrial processing peptidase (MPP), the sequential cleavage by MIP of an octapeptide after initial processing by MPP is a required step for a subgroup of nuclear-encoded precursor proteins destined for the matrix or the inner membrane. This Aspergillus niger (strain ATCC MYA-4892 / CBS 513.88 / FGSC A1513) protein is Mitochondrial intermediate peptidase (oct1).